Consider the following 1806-residue polypeptide: SH3 and multiple ankyrin repeat domains protein 3 (1806 aa).

The segment at M76–Q150 is intramolecular interaction with the ANK repeats. Y197 carries the post-translational modification Phosphotyrosine. ANK repeat units lie at residues S223–F253, D257–Y286, R290–I320, N324–A353, S357–V386, and N390–P420. The segment covering A407 to S416 has biased composition (basic and acidic residues). Residues A407–S467 are disordered. Residues L439 to A461 are compositionally biased toward pro residues. S448, S450, S463, S470, and S558 each carry phosphoserine. The 60-residue stretch at V546–M605 folds into the SH3 domain. Position 631 is a phosphotyrosine (Y631). Residues V646–T740 enclose the PDZ domain. Disordered regions lie at residues K665–D689 and P760–P853. Positions P753–P760 are required for interaction with ABI1. Phosphoserine is present on S770. A compositionally biased stretch (pro residues) spans A813–P845. Phosphoserine is present on residues S857, S866, and S877. The tract at residues R871–K1021 is disordered. Residues D906–P915 show a composition bias toward pro residues. Phosphoserine is present on residues S966 and S973. Position 988 is a phosphothreonine (T988). The span at P993–S1013 shows a compositional bias: gly residues. Y1006 carries the phosphotyrosine modification. An Asymmetric dimethylarginine modification is found at R1041. Positions P1115–P1124 are enriched in low complexity. 3 disordered regions span residues P1115 to L1460, A1475 to A1525, and S1546 to R1584. The segment covering T1173–A1193 has biased composition (basic and acidic residues). T1204 carries the post-translational modification Phosphothreonine. A phosphoserine mark is found at S1208, S1233, S1237, and S1240. Pro residues predominate over residues E1251–K1261. At T1309 the chain carries Phosphothreonine. S1328 is subject to Phosphoserine. The segment covering L1360 to E1370 has biased composition (basic and acidic residues). Low complexity-rich tracts occupy residues E1371 to V1392 and H1444 to L1460. An SH3-binding motif is present at residues P1485–P1491. S1495 is subject to Phosphoserine. Residues S1495–R1505 show a composition bias toward polar residues. Residues I1569 to E1589 adopt a coiled-coil conformation. S1585, S1596, S1604, and S1614 each carry phosphoserine. Residues P1627–S1637 show a composition bias toward low complexity. Residues P1627–G1664 are disordered. Residues V1638–A1657 are compositionally biased toward pro residues. A phosphoserine mark is found at S1709, S1711, and S1713. Residues W1743–S1806 form the SAM domain.

May homomultimerize via its SAM domain. Interacts with BAIAP2, DBNL and SLC17A7/VGLUT1. Interacts with DLGAP1/GKAP, GRM1/MGLUR1, GRM5/MGLUR5 and LZTS3 C-termini via its PDZ domain. Interacts with ABI1, HOMER1, HOMER2, HOMER3 and CTTN/cortactin SH3 domain. Is part of a complex with DLG4/PSD-95 and DLGAP1/GKAP. Interacts (via PDZ domain) with the GRIA1 subunit of the AMPA receptor (via PDZ-binding motif). Interacts with WASF1 and CYFIP2; the interactions mediate the association of SHANK3 with the WAVE1 complex. Interacts with ARPC2; the interaction probably mediates the association of SHANK3 with the Arp2/3 complex. Interacts (via ANK repeats) with SHARPIN and SPTAN1. Interacts (via PDZ domain) with ARHGAP44 (probably via PDZ-binding motif); the interaction takes place in dendritic spines and promotes GRIA1 exocytosis. Interacts with CAMK2A. Interacts with DIP2A. Interacts with ADGRL3. Expressed in the cerebral cortex and the cerebellum.

The protein resides in the cytoplasm. The protein localises to the postsynaptic density. Its subcellular location is the cell projection. It localises to the dendritic spine. Major scaffold postsynaptic density protein which interacts with multiple proteins and complexes to orchestrate the dendritic spine and synapse formation, maturation and maintenance. Interconnects receptors of the postsynaptic membrane including NMDA-type and metabotropic glutamate receptors via complexes with GKAP/PSD-95 and HOMER, respectively, and the actin-based cytoskeleton. Plays a role in the structural and functional organization of the dendritic spine and synaptic junction through the interaction with Arp2/3 and WAVE1 complex as well as the promotion of the F-actin clusters. By way of this control of actin dynamics, participates in the regulation of developing neurons growth cone motility and the NMDA receptor-signaling. Also modulates GRIA1 exocytosis and GRM5/MGLUR5 expression and signaling to control the AMPA and metabotropic glutamate receptor-mediated synaptic transmission and plasticity. May be required at an early stage of synapse formation and be inhibited by IGF1 to promote synapse maturation. This chain is SH3 and multiple ankyrin repeat domains protein 3 (SHANK3), found in Homo sapiens (Human).